The sequence spans 348 residues: MKAVTVIPGIPESLRLMDVSKPNPNKGQVLLKPIRVGVCGTDKEIIEGRYGKAPEGNQYLILGHEAVAEVVEIGDGVDNAGVGDIVVPTVRRPLNCDLPVDFCPVGHYLEHGIWGLHGHAAEYSVTDAKYLVKVPKEIVDVAVLTEPLSVVEKGIDMAMRIGQARFDWKPRTALVLGAGPVGLLATMVLRLMGLSTVTTATRPPDSLKAKLVKELGGTYVDSAVGQISGEFDIVVEATGSPQVINEGLGHIAPNGVYVLLGVYPSGGSLNNLGELMTSVVLNNKVIVGSVNAGIKHFEMALEHLRRAKDEFNNWPAKLITKRANLSNYQEAYTWTHDDIKTVLEIIQS.

Cysteine 39 provides a ligand contact to Zn(2+). Threonine 41 provides a ligand contact to substrate. 2 residues coordinate Zn(2+): histidine 64 and glutamate 65. Substrate is bound by residues glutamate 110 and glutamate 146. Glutamate 146 provides a ligand contact to Zn(2+). Residues 178–181, 260–262, and 289–291 each bind NADP(+); these read AGPV, LGV, and SVN. Asparagine 291 is a binding site for substrate.

It belongs to the zinc-containing alcohol dehydrogenase family. Glucose 1-dehydrogenase subfamily. Zn(2+) is required as a cofactor.

It catalyses the reaction D-glucose + NAD(+) = D-glucono-1,5-lactone + NADH + H(+). The catalysed reaction is D-glucose + NADP(+) = D-glucono-1,5-lactone + NADPH + H(+). Catalyzes the NAD(P)(+)-dependent oxidation of D-glucose to D-gluconate via gluconolactone. Can utilize both NAD(+) and NADP(+) as electron acceptor. Is involved in the degradation of glucose through a non-phosphorylative variant of the Entner-Doudoroff pathway. In Vulcanisaeta moutnovskia (strain 768-28), this protein is Glucose 1-dehydrogenase 2.